Reading from the N-terminus, the 232-residue chain is Platelet-activating factor acetylhydrolase IB subunit alpha1 (232 aa).

Positions 1–20 (MSGEGENPASKPTPVQDVQG) are disordered. The residue at position 2 (Ser2) is an N-acetylserine. A Phosphoserine modification is found at Ser2. Residues Ser48, Asp193, and His196 contribute to the active site.

The protein belongs to the 'GDSL' lipolytic enzyme family. Platelet-activating factor acetylhydrolase IB beta/gamma subunits subfamily. Forms a catalytic dimer which is either homodimer (alpha1/alpha1 homodimer) or heterodimer with PAFAH1B2 (alpha1/alpha2 heterodimer). Component of the cytosolic (PAF-AH (I)) heterotetrameric enzyme, which is composed of PAFAH1B1 (beta), PAFAH1B2 (alpha2) and PAFAH1B3 (alpha1) subunits. The catalytic activity of the enzyme resides in the alpha1 (PAFAH1B3) and alpha2 (PAFAH1B2) subunits, whereas the beta subunit (PAFAH1B1) has regulatory activity. Trimer formation is not essential for the catalytic activity. Interacts with VLDLR; this interaction may modulate the Reelin pathway.

It is found in the cytoplasm. It carries out the reaction a 1-O-alkyl-2-acetyl-sn-glycero-3-phosphocholine + H2O = a 1-O-alkyl-sn-glycero-3-phosphocholine + acetate + H(+). The enzyme catalyses 1-O-hexadecyl-2-acetyl-sn-glycero-3-phosphocholine + H2O = 1-O-hexadecyl-sn-glycero-3-phosphocholine + acetate + H(+). It catalyses the reaction 1-O-hexadecyl-2-acetyl-sn-glycero-3-phosphate + H2O = 1-O-hexadecyl-sn-glycero-3-phosphate + acetate + H(+). With respect to regulation, beta subunit (PAFAH1B1) inhibits the acetylhydrolase activity of the alpha1/alpha1 catalytic homodimer. Functionally, alpha1 catalytic subunit of the cytosolic type I platelet-activating factor (PAF) acetylhydrolase (PAF-AH (I)) heterotetrameric enzyme that catalyzes the hydrolyze of the acetyl group at the sn-2 position of PAF and its analogs and modulates the action of PAF. The activity and substrate specificity of PAF-AH (I) are affected by its subunit composition. Both alpha1/alpha1 homodimer (PAFAH1B3/PAFAH1B3 homodimer) and alpha1/alpha2 heterodimer(PAFAH1B3/PAFAH1B2 heterodimer) hydrolyze 1-O-alkyl-2-acetyl-sn-glycero-3-phosphoric acid (AAGPA) more efficiently than PAF, but they have little hydrolytic activity towards 1-O-alkyl-2-acetyl-sn-glycero-3-phosphorylethanolamine (AAGPE). Plays an important role during the development of brain. The chain is Platelet-activating factor acetylhydrolase IB subunit alpha1 from Mus musculus (Mouse).